A 272-amino-acid chain; its full sequence is Undecaprenyl-diphosphatase (272 aa).

7 helical membrane-spanning segments follow: residues 2-22 (FDII…FLPI), 43-63 (FINM…ILLY), 82-102 (WQLW…GLPL), 110-130 (LHTP…FIIL), 185-205 (YVAT…VSIL), 224-244 (VLMT…KWLL), and 252-272 (FKPF…VMFI).

The protein belongs to the UppP family.

It localises to the cell membrane. The enzyme catalyses di-trans,octa-cis-undecaprenyl diphosphate + H2O = di-trans,octa-cis-undecaprenyl phosphate + phosphate + H(+). Functionally, catalyzes the dephosphorylation of undecaprenyl diphosphate (UPP). Confers resistance to bacitracin. The sequence is that of Undecaprenyl-diphosphatase from Lacticaseibacillus paracasei (strain ATCC 334 / BCRC 17002 / CCUG 31169 / CIP 107868 / KCTC 3260 / NRRL B-441) (Lactobacillus paracasei).